We begin with the raw amino-acid sequence, 380 residues long: All-trans-retinol dehydrogenase [NAD(+)] ADH4 (380 aa).

Cys-47 lines the Zn(2+) pocket. 48–49 (HT) contacts NAD(+). Residues His-69, Cys-99, Cys-102, Cys-105, and Cys-113 each coordinate Zn(2+). Residue Ser-121 is modified to Phosphoserine. A Zn(2+)-binding site is contributed by Cys-180. NAD(+)-binding positions include 205 to 210 (GLGGVG), Asp-229, and Lys-234. A Phosphoserine modification is found at Ser-278. NAD(+)-binding positions include 298–300 (IGV), 323–325 (TFF), and Arg-375.

Belongs to the zinc-containing alcohol dehydrogenase family. Class-II subfamily. Homodimer. Zn(2+) is required as a cofactor.

Its subcellular location is the cytoplasm. It catalyses the reaction all-trans-retinol + NAD(+) = all-trans-retinal + NADH + H(+). The catalysed reaction is 9-cis-retinol + NAD(+) = 9-cis-retinal + NADH + H(+). It carries out the reaction 20-oxo-(5Z,8Z,11Z,14Z)-eicosatetraenoate + NAD(+) + H2O = (5Z,8Z,11Z,14Z)-eicosatetraenedioate + NADH + 2 H(+). The enzyme catalyses 20-hydroxy-(5Z,8Z,11Z,14Z)-eicosatetraenoate + NAD(+) = 20-oxo-(5Z,8Z,11Z,14Z)-eicosatetraenoate + NADH + H(+). It catalyses the reaction 1,4-benzoquinone + NADH + H(+) = hydroquinone + NAD(+). Its activity is regulated as follows. Oxydation of 20-HETE is inhibited by low concentrations of N-heptylformamide. Oxydation of 20-HETE is a decreased by 55-65% by either all-trans-retinol or all-trans-retinoic acid. Strongly inhibited by omega-hydroxy fatty acids. Catalyzes the NAD-dependent oxidation of either all-trans-retinol or 9-cis-retinol. Also oxidizes long chain omega-hydroxy fatty acids, such as 20-HETE, producing both the intermediate aldehyde, 20-oxoarachidonate and the end product, a dicarboxylic acid, (5Z,8Z,11Z,14Z)-eicosatetraenedioate. Also catalyzes the reduction of benzoquinones. The protein is All-trans-retinol dehydrogenase [NAD(+)] ADH4 of Homo sapiens (Human).